The chain runs to 570 residues: MDELPKCGANYVPLTPLTFLTRAFKSYANRTSIIYAGARFTWEQTYKRCCRLASSLQSLNIVKNDVVSVLAPNVPATYEMHFAVPMAGAVLNTINTRLDPMNIAIILKHSEAKLLFVDYEYLEKARKALELLMSTNFITAQNSKKISMPQVILIDDLYSPTRIQQQDQLEYEQLVHQGNPEYAPENIVDDEWDPIVLNYTSGTTSEPKGVVYSHRGAFLSTLNTIMGWEMGTEPVYLWSLPMFHINGWTLTWGIAARGGTNVCIRNTTAQEIYSNITLHKVTHMCCAPTVFNILLEAKPHERREITTPVQVMVGGAPPPTTLIGKIEELGFHVVHCYGITEAGGTTLVCEWQSEWNKLSREDQANLKARQGISVLALEDVDVKNSKTMQSVPHNGKTMGEICLRGSSIMKGYFKNDKANSQVFKNGWFLTGDVAVIHQDGYLEIKDRCKDIIISGGENISSIEVENAILKHPSVIEAAVVAMPHPRWGETPCAFVIKTKNPEIKEADIIVHCKKELPGFMVPKHVQFLEELPKTGTGKVKKLQLREMAKSFGIFDNANQTSQILDLPARL.

Residues 568 to 570 (ARL) carry the Microbody targeting signal motif.

It belongs to the ATP-dependent AMP-binding enzyme family. In terms of assembly, monomer. It depends on K(+) as a cofactor. In terms of tissue distribution, mostly expressed in flower organs, with highest levels in corollas and petal limbs, and, to a lesser extent, in petal tubes, sepals, pistils, stamen, stigma, anthers and ovaries. Also present at low levels in leaves, stems and roots.

It localises to the peroxisome. The catalysed reaction is (E)-4-coumarate + ATP + CoA = (E)-4-coumaroyl-CoA + AMP + diphosphate. It carries out the reaction (E)-caffeate + ATP + CoA = (E)-caffeoyl-CoA + AMP + diphosphate. The enzyme catalyses (E)-cinnamate + ATP + CoA = (E)-cinnamoyl-CoA + AMP + diphosphate. Its pathway is phenylpropanoid metabolism; trans-cinnamate biosynthesis. The protein operates within phytoalexin biosynthesis; 3,4',5-trihydroxystilbene biosynthesis; 3,4',5-trihydroxystilbene from trans-4-coumarate: step 1/2. Functionally, involved in the biosynthesis of floral volatile benzenoid/phenylpropanoid (FVBP) scent (e.g. benzylbenzoate, phenylethylbenzoate, and methylbenzoate). Catalyzes the formation of CoA esters of cinnamic acid, and, with lower efficiency, of 4-coumaric acid and caffeic acid. The chain is Trans-cinnamate:CoA ligase, peroxisomal from Petunia hybrida (Petunia).